A 263-amino-acid polypeptide reads, in one-letter code: GTP cyclohydrolase FolE2 (263 aa).

It belongs to the GTP cyclohydrolase IV family.

It carries out the reaction GTP + H2O = 7,8-dihydroneopterin 3'-triphosphate + formate + H(+). The protein operates within cofactor biosynthesis; 7,8-dihydroneopterin triphosphate biosynthesis; 7,8-dihydroneopterin triphosphate from GTP: step 1/1. Converts GTP to 7,8-dihydroneopterin triphosphate. In Nitrosospira multiformis (strain ATCC 25196 / NCIMB 11849 / C 71), this protein is GTP cyclohydrolase FolE2.